The sequence spans 117 residues: Putative pterin-4-alpha-carbinolamine dehydratase (117 aa).

This sequence belongs to the pterin-4-alpha-carbinolamine dehydratase family.

It carries out the reaction (4aS,6R)-4a-hydroxy-L-erythro-5,6,7,8-tetrahydrobiopterin = (6R)-L-erythro-6,7-dihydrobiopterin + H2O. The polypeptide is Putative pterin-4-alpha-carbinolamine dehydratase (Colwellia psychrerythraea (strain 34H / ATCC BAA-681) (Vibrio psychroerythus)).